Consider the following 487-residue polypeptide: Glutamate--tRNA ligase (487 aa).

The 'HIGH' region signature appears at proline 13–glycine 23. Positions lysine 255 to arginine 259 match the 'KMSKS' region motif. Position 258 (lysine 258) interacts with ATP.

It belongs to the class-I aminoacyl-tRNA synthetase family. Glutamate--tRNA ligase type 1 subfamily. As to quaternary structure, monomer.

Its subcellular location is the cytoplasm. It carries out the reaction tRNA(Glu) + L-glutamate + ATP = L-glutamyl-tRNA(Glu) + AMP + diphosphate. Catalyzes the attachment of glutamate to tRNA(Glu) in a two-step reaction: glutamate is first activated by ATP to form Glu-AMP and then transferred to the acceptor end of tRNA(Glu). The protein is Glutamate--tRNA ligase of Malacoplasma penetrans (strain HF-2) (Mycoplasma penetrans).